A 384-amino-acid polypeptide reads, in one-letter code: 8-amino-7-oxononanoate synthase (384 aa).

Residue Arg-21 participates in substrate binding. 108 to 109 contributes to the pyridoxal 5'-phosphate binding site; it reads GF. His-133 contributes to the substrate binding site. Pyridoxal 5'-phosphate contacts are provided by Ser-179, His-207, and Thr-233. Lys-236 carries the post-translational modification N6-(pyridoxal phosphate)lysine. Thr-352 provides a ligand contact to substrate.

It belongs to the class-II pyridoxal-phosphate-dependent aminotransferase family. BioF subfamily. In terms of assembly, homodimer. Requires pyridoxal 5'-phosphate as cofactor.

It carries out the reaction 6-carboxyhexanoyl-[ACP] + L-alanine + H(+) = (8S)-8-amino-7-oxononanoate + holo-[ACP] + CO2. The protein operates within cofactor biosynthesis; biotin biosynthesis. Functionally, catalyzes the decarboxylative condensation of pimeloyl-[acyl-carrier protein] and L-alanine to produce 8-amino-7-oxononanoate (AON), [acyl-carrier protein], and carbon dioxide. The polypeptide is 8-amino-7-oxononanoate synthase (Escherichia fergusonii (strain ATCC 35469 / DSM 13698 / CCUG 18766 / IAM 14443 / JCM 21226 / LMG 7866 / NBRC 102419 / NCTC 12128 / CDC 0568-73)).